Here is a 498-residue protein sequence, read N- to C-terminus: ATP synthase subunit beta, chloroplastic (498 aa).

ATP is bound at residue 172-179; sequence GGAGVGKT.

This sequence belongs to the ATPase alpha/beta chains family. As to quaternary structure, F-type ATPases have 2 components, CF(1) - the catalytic core - and CF(0) - the membrane proton channel. CF(1) has five subunits: alpha(3), beta(3), gamma(1), delta(1), epsilon(1). CF(0) has four main subunits: a(1), b(1), b'(1) and c(9-12).

The protein localises to the plastid. It is found in the chloroplast thylakoid membrane. The catalysed reaction is ATP + H2O + 4 H(+)(in) = ADP + phosphate + 5 H(+)(out). Produces ATP from ADP in the presence of a proton gradient across the membrane. The catalytic sites are hosted primarily by the beta subunits. In Pelargonium hortorum (Common geranium), this protein is ATP synthase subunit beta, chloroplastic.